Consider the following 198-residue polypeptide: Small ribosomal subunit protein uS4c (198 aa).

A disordered region spans residues 17-40; that stretch reads TLPGLTSKRPKNRKDSMNRSSSRK. Positions 88-154 constitute an S4 RNA-binding domain; it reads MRLDKSFSIG…IKKNIDLFQR (67 aa).

It belongs to the universal ribosomal protein uS4 family. Part of the 30S ribosomal subunit. Contacts protein S5. The interaction surface between S4 and S5 is involved in control of translational fidelity.

The protein localises to the plastid. It is found in the chloroplast. One of the primary rRNA binding proteins, it binds directly to 16S rRNA where it nucleates assembly of the body of the 30S subunit. Functionally, with S5 and S12 plays an important role in translational accuracy. This is Small ribosomal subunit protein uS4c (rps4) from Pinus thunbergii (Japanese black pine).